The chain runs to 127 residues: Stationary phase protein 3 (127 aa).

The next 2 membrane-spanning stretches (helical) occupy residues 29–49 (LFLFLFVFVFVFIFVYFFYVI) and 63–83 (ANSIWYYLSIINIFFPLCFFL). A glycan (N-linked (GlcNAc...) asparagine) is linked at N86.

Its subcellular location is the membrane. In terms of biological role, required for survival during stationary phase. In Saccharomyces cerevisiae (strain ATCC 204508 / S288c) (Baker's yeast), this protein is Stationary phase protein 3 (SPG3).